Consider the following 201-residue polypeptide: MSKRIAGPEIERLIQLLARVPGLGPRSARRAALHLIKKKEALLVPLGGAMQEAAEKVRICSCCGNVDTSDPCTICTDERRDPATLIVVEDVSDLWALERADTMNVRYHVLGGRLSPLDGIGPDDLNIKGLVERVASGAIKEVILAVNATVEGQTTAHYITDQLSNFDMRVTRLAHGVPVGGELDYLDEGTLAAALRARTTL.

The segment at 60–75 (CSCCGNVDTSDPCTIC) adopts a C4-type zinc-finger fold. The Toprim domain occupies 83–178 (ATLIVVEDVS…RVTRLAHGVP (96 aa)).

This sequence belongs to the RecR family.

May play a role in DNA repair. It seems to be involved in an RecBC-independent recombinational process of DNA repair. It may act with RecF and RecO. The chain is Recombination protein RecR from Brucella melitensis biotype 2 (strain ATCC 23457).